The chain runs to 381 residues: Cytochrome b (381 aa).

Transmembrane regions (helical) follow at residues 32 to 52 (GGSLAGMMLASQMLTGILLAM), 76 to 98 (MILRYAHANGASLFFIVVYLHVL), 113 to 133 (VWISGVVILLVMIITAFIGYV), and 179 to 199 (FYSFHYTLPFILAGLSVFHIA). Residues His82 and His96 each contribute to the heme b site. Residues His183 and His197 each coordinate heme b. His202 contributes to the a ubiquinone binding site. 4 helical membrane passes run 225 to 245 (FGAKDLVGALFLALVFSILVF), 289 to 309 (AMGVLAIGLVFASLFAMPFIG), 318 to 338 (ITEWLYWTFLADVLLLTWLGG), and 345 to 365 (TSFVGQCCTAYLFFYLLVCQP).

The protein belongs to the cytochrome b family. As to quaternary structure, the main subunits of complex b-c1 are: cytochrome b, cytochrome c1 and the Rieske protein. Requires heme b as cofactor.

The protein resides in the mitochondrion inner membrane. In terms of biological role, component of the ubiquinol-cytochrome c reductase complex (complex III or cytochrome b-c1 complex) that is part of the mitochondrial respiratory chain. The b-c1 complex mediates electron transfer from ubiquinol to cytochrome c. Contributes to the generation of a proton gradient across the mitochondrial membrane that is then used for ATP synthesis. In Chlamydomonas reinhardtii (Chlamydomonas smithii), this protein is Cytochrome b (MT-CYB).